The sequence spans 159 residues: Phosphopantetheine adenylyltransferase (159 aa).

Residue serine 8 participates in substrate binding. Residues 8–9 (SF) and histidine 16 each bind ATP. Substrate is bound by residues lysine 40, threonine 72, and arginine 86. Residues 87-89 (GLR), glutamate 97, and 122-128 (HSFVSSS) each bind ATP.

The protein belongs to the bacterial CoaD family. As to quaternary structure, homohexamer. Mg(2+) is required as a cofactor.

It is found in the cytoplasm. The catalysed reaction is (R)-4'-phosphopantetheine + ATP + H(+) = 3'-dephospho-CoA + diphosphate. It participates in cofactor biosynthesis; coenzyme A biosynthesis; CoA from (R)-pantothenate: step 4/5. Reversibly transfers an adenylyl group from ATP to 4'-phosphopantetheine, yielding dephospho-CoA (dPCoA) and pyrophosphate. The polypeptide is Phosphopantetheine adenylyltransferase (Synechococcus sp. (strain JA-3-3Ab) (Cyanobacteria bacterium Yellowstone A-Prime)).